A 109-amino-acid polypeptide reads, in one-letter code: N-alpha-acetyltransferase 38, NatC auxiliary subunit (109 aa).

The Sm domain occupies 23 to 101; that stretch reads LARCKLENLL…VVSIEVETES (79 aa).

This sequence belongs to the snRNP Sm proteins family. In terms of assembly, component of the N-terminal acetyltransferase C (NatC) complex.

It is found in the cytoplasm. Its subcellular location is the nucleus. Functionally, auxillary component of the N-terminal acetyltransferase C (NatC) complex which catalyzes acetylation of N-terminal methionine residues. N-terminal acetylation protects proteins from ubiquitination and degradation by the N-end rule pathway. The polypeptide is N-alpha-acetyltransferase 38, NatC auxiliary subunit (naa38) (Danio rerio (Zebrafish)).